The following is a 320-amino-acid chain: Homoserine kinase (320 aa).

Residue 100-110 participates in ATP binding; that stretch reads PLSSGMGSSAA.

It belongs to the GHMP kinase family. Homoserine kinase subfamily.

It localises to the cytoplasm. The catalysed reaction is L-homoserine + ATP = O-phospho-L-homoserine + ADP + H(+). The protein operates within amino-acid biosynthesis; L-threonine biosynthesis; L-threonine from L-aspartate: step 4/5. Functionally, catalyzes the ATP-dependent phosphorylation of L-homoserine to L-homoserine phosphate. This Chlorobium phaeobacteroides (strain BS1) protein is Homoserine kinase.